Here is a 110-residue protein sequence, read N- to C-terminus: Large ribosomal subunit protein uL22 (110 aa).

This sequence belongs to the universal ribosomal protein uL22 family. In terms of assembly, part of the 50S ribosomal subunit.

In terms of biological role, this protein binds specifically to 23S rRNA; its binding is stimulated by other ribosomal proteins, e.g. L4, L17, and L20. It is important during the early stages of 50S assembly. It makes multiple contacts with different domains of the 23S rRNA in the assembled 50S subunit and ribosome. The globular domain of the protein is located near the polypeptide exit tunnel on the outside of the subunit, while an extended beta-hairpin is found that lines the wall of the exit tunnel in the center of the 70S ribosome. The chain is Large ribosomal subunit protein uL22 from Baumannia cicadellinicola subsp. Homalodisca coagulata.